We begin with the raw amino-acid sequence, 539 residues long: Squalene monooxygenase SE1 (539 aa).

2 consecutive transmembrane segments (helical) span residues 22–42 (LLID…FLLL) and 71–91 (IAGS…ALAY). FAD is bound by residues 84 to 85 (VA), 104 to 105 (ER), R112, R183, V199, D361, and M374. Residues 472–492 (LFLHFFAVAIYGVGRLLIPFP) traverse the membrane as a helical segment.

The protein belongs to the squalene monooxygenase family. FAD is required as a cofactor. In terms of tissue distribution, mostly expressed in flower buds and leaves, and, to a lower extent, at high levels thought, in roots and petioles. In petioles, preferentially observed in vascular bundle tissue (phloem cells and parenchymatous cells near xylem) and resin ducts.

Its subcellular location is the microsome membrane. It is found in the endoplasmic reticulum membrane. The enzyme catalyses squalene + reduced [NADPH--hemoprotein reductase] + O2 = (S)-2,3-epoxysqualene + oxidized [NADPH--hemoprotein reductase] + H2O + H(+). The protein operates within terpene metabolism; lanosterol biosynthesis; lanosterol from farnesyl diphosphate: step 2/3. Component of the triterpene saponins (e.g. ginsenosides or panaxosides) and phytosterols biosynthetic pathways. Catalyzes the first oxygenation step in sterol biosynthesis and is suggested to be one of the rate-limiting enzymes in this pathway. This Panax ginseng (Korean ginseng) protein is Squalene monooxygenase SE1.